The chain runs to 339 residues: 5-dehydro-2-deoxygluconokinase (339 aa).

The protein belongs to the carbohydrate kinase PfkB family.

It catalyses the reaction 5-dehydro-2-deoxy-D-gluconate + ATP = 6-phospho-5-dehydro-2-deoxy-D-gluconate + ADP + H(+). The protein operates within polyol metabolism; myo-inositol degradation into acetyl-CoA; acetyl-CoA from myo-inositol: step 5/7. Catalyzes the phosphorylation of 5-dehydro-2-deoxy-D-gluconate (2-deoxy-5-keto-D-gluconate or DKG) to 6-phospho-5-dehydro-2-deoxy-D-gluconate (DKGP). This is 5-dehydro-2-deoxygluconokinase from Clostridium botulinum (strain Alaska E43 / Type E3).